Here is a 113-residue protein sequence, read N- to C-terminus: UPF0145 protein SynWH7803_1684 (113 aa).

It belongs to the UPF0145 family.

The sequence is that of UPF0145 protein SynWH7803_1684 from Synechococcus sp. (strain WH7803).